A 286-amino-acid polypeptide reads, in one-letter code: Haloalkane dehalogenase 2 (286 aa).

In terms of domain architecture, AB hydrolase-1 spans 35-134 (PPILLCHGNP…RVRGVVLGNT (100 aa)). The Nucleophile role is filled by aspartate 109. Aspartate 238 (proton donor) is an active-site residue. The Proton acceptor role is filled by histidine 267.

It belongs to the haloalkane dehalogenase family. Type 1 subfamily. As to quaternary structure, monomer.

The catalysed reaction is 1-haloalkane + H2O = a halide anion + a primary alcohol + H(+). Its function is as follows. Catalyzes hydrolytic cleavage of carbon-halogen bonds in halogenated aliphatic compounds, leading to the formation of the corresponding primary alcohols, halide ions and protons. In Mycobacterium bovis (strain ATCC BAA-935 / AF2122/97), this protein is Haloalkane dehalogenase 2 (dhmA2).